The following is a 432-amino-acid chain: Adenylosuccinate synthetase (432 aa).

GTP-binding positions include glycine 13 to lysine 19 and glycine 41 to threonine 43. The active-site Proton acceptor is aspartate 14. The Mg(2+) site is built by aspartate 14 and glycine 41. Residues aspartate 14–lysine 17, asparagine 39–histidine 42, threonine 130, arginine 144, glutamine 225, threonine 240, and arginine 304 each bind IMP. Residue histidine 42 is the Proton donor of the active site. Residue alanine 300–arginine 306 coordinates substrate. GTP-binding positions include arginine 306, lysine 332–aspartate 334, and serine 415–glycine 417.

This sequence belongs to the adenylosuccinate synthetase family. Homodimer. Mg(2+) serves as cofactor.

The protein resides in the cytoplasm. It carries out the reaction IMP + L-aspartate + GTP = N(6)-(1,2-dicarboxyethyl)-AMP + GDP + phosphate + 2 H(+). It participates in purine metabolism; AMP biosynthesis via de novo pathway; AMP from IMP: step 1/2. Functionally, plays an important role in the de novo pathway of purine nucleotide biosynthesis. Catalyzes the first committed step in the biosynthesis of AMP from IMP. The protein is Adenylosuccinate synthetase of Actinobacillus pleuropneumoniae serotype 3 (strain JL03).